Consider the following 216-residue polypeptide: Pyrophosphatase PpaX (216 aa).

The Nucleophile role is filled by Asp9.

The protein belongs to the HAD-like hydrolase superfamily. PpaX family. Requires Mg(2+) as cofactor.

The enzyme catalyses diphosphate + H2O = 2 phosphate + H(+). Functionally, hydrolyzes pyrophosphate formed during P-Ser-HPr dephosphorylation by HPrK/P. Might play a role in controlling the intracellular pyrophosphate pool. The chain is Pyrophosphatase PpaX from Bacillus anthracis (strain CDC 684 / NRRL 3495).